Here is a 261-residue protein sequence, read N- to C-terminus: Putative outer membrane protein CT_371 (261 aa).

Positions 1 to 18 are cleaved as a signal peptide; it reads MRLCFILFLLLSPLISEA.

The protein resides in the cell outer membrane. The chain is Putative outer membrane protein CT_371 from Chlamydia trachomatis serovar D (strain ATCC VR-885 / DSM 19411 / UW-3/Cx).